Here is a 397-residue protein sequence, read N- to C-terminus: uncharacterized protein (397 aa).

Helical transmembrane passes span 22–42, 270–290, 327–347, and 362–382; these read ILTMLGIIIGVGSVIVVVAVG, IMTTIIGSIAGISLLVGGIGV, VVLTLIGGLVGIGIGYGGAAL, and VVCGGVLFSMLIGVIFGMLPA.

It belongs to the ABC-4 integral membrane protein family. As to quaternary structure, part of a complex composed of YknX, YknY and YknZ. The complex interacts with YknW.

The protein localises to the cell membrane. The protein resides in the membrane raft. In terms of biological role, part of an unusual four-component transporter, which is required for protection against the killing factor SdpC (sporulation-delaying protein). This is an uncharacterized protein from Bacillus subtilis (strain 168).